A 272-amino-acid polypeptide reads, in one-letter code: Protein STAY-GREEN 1, chloroplastic (272 aa).

Residues 1 to 50 constitute a chloroplast transit peptide; that stretch reads MGTLTTSLVVPSKLNNEQQSSIFIHKTRRKCKKNQSIVPVARLFGPAIFE. A disordered region spans residues 201–222; that stretch reads TSPSSSSGGVGGVKSTSFTSNS.

Belongs to the staygreen family. Interacts with PSY1.

It localises to the plastid. It is found in the chloroplast. Required to trigger chlorophyll degradation during leaf senescence and fruit ripening. Binds directly PSY1 to regulate the accumulation of lycopene and beta-carotene in the maturing fruits. This chain is Protein STAY-GREEN 1, chloroplastic, found in Solanum lycopersicum (Tomato).